The chain runs to 191 residues: Cell division protein SepF (191 aa).

Positions 153 to 178 (FPEEVSPSNISSKKTSPYSLETNTTP) are enriched in polar residues. Residues 153-191 (FPEEVSPSNISSKKTSPYSLETNTTPEPAWGESKLSAFS) form a disordered region.

Belongs to the SepF family. Homodimer. Interacts with FtsZ.

It localises to the cytoplasm. Its function is as follows. Cell division protein that is part of the divisome complex and is recruited early to the Z-ring. Probably stimulates Z-ring formation, perhaps through the cross-linking of FtsZ protofilaments. Its function overlaps with FtsA. This Prochlorococcus marinus (strain MIT 9515) protein is Cell division protein SepF.